A 59-amino-acid polypeptide reads, in one-letter code: UPF0391 membrane protein lpp2589 (59 aa).

The next 2 helical transmembrane spans lie at 5–25 and 30–50; these read ALIFFIIAIIAAAFGFGGIAV and IAKILFFLFLVMFVIFLIMGL.

Belongs to the UPF0391 family.

The protein localises to the cell membrane. In Legionella pneumophila (strain Paris), this protein is UPF0391 membrane protein lpp2589.